The primary structure comprises 107 residues: U1-lycotoxin-Ls1g (107 aa).

An N-terminal signal peptide occupies residues 1–20; that stretch reads MMKVLVVVALLVTLISYSSS. Residues 21-41 constitute a propeptide that is removed on maturation; the sequence is EGIDDLEADELLSLMANEQTR. 3 disulfide bridges follow: cysteine 51/cysteine 68, cysteine 58/cysteine 86, and cysteine 70/cysteine 84.

Belongs to the neurotoxin 19 (CSTX) family. 04 (U1-Lctx) subfamily. As to expression, expressed by the venom gland.

The protein resides in the secreted. This is U1-lycotoxin-Ls1g from Lycosa singoriensis (Wolf spider).